A 236-amino-acid chain; its full sequence is Phosphoribosylaminoimidazole-succinocarboxamide synthase (236 aa).

It belongs to the SAICAR synthetase family.

It carries out the reaction 5-amino-1-(5-phospho-D-ribosyl)imidazole-4-carboxylate + L-aspartate + ATP = (2S)-2-[5-amino-1-(5-phospho-beta-D-ribosyl)imidazole-4-carboxamido]succinate + ADP + phosphate + 2 H(+). It functions in the pathway purine metabolism; IMP biosynthesis via de novo pathway; 5-amino-1-(5-phospho-D-ribosyl)imidazole-4-carboxamide from 5-amino-1-(5-phospho-D-ribosyl)imidazole-4-carboxylate: step 1/2. The polypeptide is Phosphoribosylaminoimidazole-succinocarboxamide synthase (Rickettsia canadensis (strain McKiel)).